The following is a 508-amino-acid chain: Photosystem II CP47 reaction center protein (508 aa).

The next 6 membrane-spanning stretches (helical) occupy residues 21 to 36, 101 to 115, 140 to 156, 203 to 218, 237 to 252, and 457 to 472; these read SVHL…WAGS, IILS…IWHW, GIHL…FGAF, IAAG…FHLS, VLSS…AFVV, and TFAL…HGAR.

Belongs to the PsbB/PsbC family. PsbB subfamily. In terms of assembly, PSII is composed of 1 copy each of membrane proteins PsbA, PsbB, PsbC, PsbD, PsbE, PsbF, PsbH, PsbI, PsbJ, PsbK, PsbL, PsbM, PsbT, PsbX, PsbY, PsbZ, Psb30/Ycf12, at least 3 peripheral proteins of the oxygen-evolving complex and a large number of cofactors. It forms dimeric complexes. Binds multiple chlorophylls. PSII binds additional chlorophylls, carotenoids and specific lipids. serves as cofactor.

Its subcellular location is the plastid. It is found in the chloroplast thylakoid membrane. Functionally, one of the components of the core complex of photosystem II (PSII). It binds chlorophyll and helps catalyze the primary light-induced photochemical processes of PSII. PSII is a light-driven water:plastoquinone oxidoreductase, using light energy to abstract electrons from H(2)O, generating O(2) and a proton gradient subsequently used for ATP formation. This chain is Photosystem II CP47 reaction center protein, found in Adiantum capillus-veneris (Maidenhair fern).